A 254-amino-acid chain; its full sequence is uncharacterized protein (254 aa).

5 helical membrane passes run 33-53, 70-90, 92-112, 133-153, and 223-243; these read MLWV…LFFI, FNKL…LFKS, FALS…LNFM, FIIF…ILLI, and FLVF…PLIF.

To M.jannaschii MJ0902.

Its subcellular location is the cell membrane. This is an uncharacterized protein from Methanocaldococcus jannaschii (strain ATCC 43067 / DSM 2661 / JAL-1 / JCM 10045 / NBRC 100440) (Methanococcus jannaschii).